The chain runs to 263 residues: Interleukin-22 receptor subunit alpha-2 (263 aa).

Positions 1–21 are cleaved as a signal peptide; sequence MMPKHCFLGFLISFFLTGVAG. 3 consecutive Fibronectin type-III domains span residues 26–68, 100–161, and 162–263; these read HESL…KIMF, GQRQ…TKID, and PPVM…VEIP. An N-linked (GlcNAc...) asparagine glycan is attached at Asn-56. An intrachain disulfide couples Cys-110 to Cys-118. Asn-166, Asn-171, Asn-192, and Asn-209 each carry an N-linked (GlcNAc...) asparagine glycan. The cysteines at positions 238 and 259 are disulfide-linked.

The protein belongs to the type II cytokine receptor family. As to expression, expressed in placenta, spleen, breast, skin and lung. Also detected in intestinal tract, testis, brain, heart and thymus. No expression found in prostate, bladder, kidney, ovary, muscle, bone marrow, liver and uterus. Isoform 1 is expressed only in placenta. Isoform 2 is expressed in placenta and breast and at lower level in spleen, skin, thymus and stomach.

It is found in the secreted. Functionally, isoform 2 is a receptor for IL22. Binds to IL22, prevents interaction with the functional IL-22R complex and blocks the activity of IL22 (in vitro). May play an important role as an IL22 antagonist in the regulation of inflammatory responses. In terms of biological role, isoform 1 may play a role in establishing and maintaining successful pregnancy. In Homo sapiens (Human), this protein is Interleukin-22 receptor subunit alpha-2 (IL22RA2).